Consider the following 592-residue polypeptide: MKLIASFSIFMLMSIWSFASLGQSNSFDSLFSNEPEFLKVDQAFVFDYVQNGDQLVVTWDIADDYYLYQQQFKAVSKNASLGEPIFPTGKMKEDEFFDEPQEVYYHKVSVTYPILQSQDDSAVKIRYQGCAEAGLCYPPTTQVVYLNAVNASDDLSNTDEASVESSGSVSQQFELADLLTGDQSLIWVLLIFLALGVGLAFTPCVFPMYPILSGIVIGQGKSISTSRAFVLSFVYVQGMALTYSLLGLVVASAGVQFQAALQHPIILGALIVVFALLALVMFGAWEFQLPSSWQEKLNGVSNQQKSGSYLGVLLMGAISGLVASPCTTAPLTGILLYIAQTSDLLLGFSALYALSLGMGIPLILFGITGGKLLPKAGAWMNIIKVTFGFMMLAVALMFVERLVSHMATDILWSLLGLVTFSYFYVMNQASSVTFGKGVRALVIFIGLFASAMYGYQTIFGQTSSVAGHTEQSHPRFEVVKNLDDFEQKLAAANAQGKTVMVDLYADWCVACKEFEKYTFPDTQVVDALSNTVWMQIDLTDNTATNIAFQEHFSILGLPTILFFDLQGKEISGSRVTGFMQASAFAAHAKNIL.

An N-terminal signal peptide occupies residues 1-19 (MKLIASFSIFMLMSIWSFA). Disulfide bonds link Cys130/Cys136 and Cys204/Cys326. The next 8 helical transmembrane spans lie at 186 to 206 (IWVL…PCVF), 229 to 249 (FVLS…LGLV), 265 to 285 (IILG…FGAW), 318 to 338 (ISGL…LLYI), 345 to 365 (LLGF…LILF), 379 to 399 (WMNI…LMFV), 406 to 426 (MATD…FYVM), and 440 to 460 (ALVI…TIFG). In terms of domain architecture, Thioredoxin spans 443 to 592 (IFIGLFASAM…AFAAHAKNIL (150 aa)). Cysteines 508 and 511 form a disulfide.

The protein belongs to the thioredoxin family. DsbD subfamily.

The protein localises to the cell inner membrane. It carries out the reaction [protein]-dithiol + NAD(+) = [protein]-disulfide + NADH + H(+). The catalysed reaction is [protein]-dithiol + NADP(+) = [protein]-disulfide + NADPH + H(+). In terms of biological role, required to facilitate the formation of correct disulfide bonds in some periplasmic proteins and for the assembly of the periplasmic c-type cytochromes. Acts by transferring electrons from cytoplasmic thioredoxin to the periplasm. This transfer involves a cascade of disulfide bond formation and reduction steps. This Pseudoalteromonas atlantica (strain T6c / ATCC BAA-1087) protein is Thiol:disulfide interchange protein DsbD.